The sequence spans 142 residues: Neuritin (142 aa).

Positions 1–27 (MGLTLSGRYISLFLAVQIAYLLQAVRA) are cleaved as a signal peptide. A lipid anchor (GPI-anchor amidated alanine) is attached at A112. Residues 113–142 (GGNGAIRSSVPFGVTLLITALSALVTWMQF) constitute a propeptide, removed in mature form.

This sequence belongs to the neuritin family.

The protein localises to the cell membrane. It is found in the synapse. In terms of biological role, modulates postsynaptic dendritic arbor elaboration and synaptic maturation. This Danio rerio (Zebrafish) protein is Neuritin (nrn1).